The sequence spans 170 residues: Neurotensin/neuromedin N (170 aa).

Positions 1–23 are cleaved as a signal peptide; sequence MMAGMKIQLVCMILLAFSSWSLC.

It belongs to the neurotensin family. Interacts with NTSR1. Interacts with SORT1. Interacts with SORL1. Post-translationally, neurotensin is cleaved and degraded by Angiotensin-converting enzyme (ACE) and neprilysin (MME).

Its subcellular location is the secreted. It is found in the cytoplasmic vesicle. The protein localises to the secretory vesicle. In terms of biological role, neurotensin may play an endocrine or paracrine role in the regulation of fat metabolism. It causes contraction of smooth muscle. This is Neurotensin/neuromedin N (NTS) from Canis lupus familiaris (Dog).